The sequence spans 76 residues: Sec-independent protein translocase protein TatA (76 aa).

Residues 1–21 (MGGLSIWHWLIVLLIVALVFG) traverse the membrane as a helical segment. The disordered stretch occupies residues 43 to 76 (MKEGEAPADAQQLPRSGSVDVNAKETTRSDSNKA). The span at 64-76 (NAKETTRSDSNKA) shows a compositional bias: basic and acidic residues.

This sequence belongs to the TatA/E family. In terms of assembly, the Tat system comprises two distinct complexes: a TatABC complex, containing multiple copies of TatA, TatB and TatC subunits, and a separate TatA complex, containing only TatA subunits. Substrates initially bind to the TatABC complex, which probably triggers association of the separate TatA complex to form the active translocon.

It localises to the cell inner membrane. In terms of biological role, part of the twin-arginine translocation (Tat) system that transports large folded proteins containing a characteristic twin-arginine motif in their signal peptide across membranes. TatA could form the protein-conducting channel of the Tat system. The chain is Sec-independent protein translocase protein TatA from Burkholderia lata (strain ATCC 17760 / DSM 23089 / LMG 22485 / NCIMB 9086 / R18194 / 383).